The following is a 405-amino-acid chain: Probable tRNA sulfurtransferase (405 aa).

Residues 60 to 165 enclose the THUMP domain; sequence DKIDQRLKLV…QDAIYISNQL (106 aa). ATP-binding positions include 183 to 184, 208 to 209, Arg-265, Gly-287, and Gln-296; these read ML and HF.

It belongs to the ThiI family.

The protein localises to the cytoplasm. The enzyme catalyses [ThiI sulfur-carrier protein]-S-sulfanyl-L-cysteine + a uridine in tRNA + 2 reduced [2Fe-2S]-[ferredoxin] + ATP + H(+) = [ThiI sulfur-carrier protein]-L-cysteine + a 4-thiouridine in tRNA + 2 oxidized [2Fe-2S]-[ferredoxin] + AMP + diphosphate. The catalysed reaction is [ThiS sulfur-carrier protein]-C-terminal Gly-Gly-AMP + S-sulfanyl-L-cysteinyl-[cysteine desulfurase] + AH2 = [ThiS sulfur-carrier protein]-C-terminal-Gly-aminoethanethioate + L-cysteinyl-[cysteine desulfurase] + A + AMP + 2 H(+). Its pathway is cofactor biosynthesis; thiamine diphosphate biosynthesis. In terms of biological role, catalyzes the ATP-dependent transfer of a sulfur to tRNA to produce 4-thiouridine in position 8 of tRNAs, which functions as a near-UV photosensor. Also catalyzes the transfer of sulfur to the sulfur carrier protein ThiS, forming ThiS-thiocarboxylate. This is a step in the synthesis of thiazole, in the thiamine biosynthesis pathway. The sulfur is donated as persulfide by IscS. This chain is Probable tRNA sulfurtransferase, found in Lactobacillus gasseri (strain ATCC 33323 / DSM 20243 / BCRC 14619 / CIP 102991 / JCM 1131 / KCTC 3163 / NCIMB 11718 / NCTC 13722 / AM63).